Here is a 432-residue protein sequence, read N- to C-terminus: Tol-Pal system protein TolB (432 aa).

A signal peptide spans 1–24; it reads MKLVTRMWSILIVFFLAVLQPAQA.

It belongs to the TolB family. As to quaternary structure, the Tol-Pal system is composed of five core proteins: the inner membrane proteins TolA, TolQ and TolR, the periplasmic protein TolB and the outer membrane protein Pal. They form a network linking the inner and outer membranes and the peptidoglycan layer.

It localises to the periplasm. Functionally, part of the Tol-Pal system, which plays a role in outer membrane invagination during cell division and is important for maintaining outer membrane integrity. The polypeptide is Tol-Pal system protein TolB (Pasteurella multocida (strain Pm70)).